Reading from the N-terminus, the 237-residue chain is LexA repressor (237 aa).

Positions 26 to 46 form a DNA-binding region, H-T-H motif; the sequence is FDEMKEALDLRSKSGIHRLIT. The tract at residues 84 to 110 is disordered; it reads GFSPSVIEGGAQPKPSSRDLAPARSSG. Residues Ser-158 and Lys-196 each act as for autocatalytic cleavage activity in the active site.

This sequence belongs to the peptidase S24 family. Homodimer.

It carries out the reaction Hydrolysis of Ala-|-Gly bond in repressor LexA.. Its function is as follows. Represses a number of genes involved in the response to DNA damage (SOS response), including recA and lexA. In the presence of single-stranded DNA, RecA interacts with LexA causing an autocatalytic cleavage which disrupts the DNA-binding part of LexA, leading to derepression of the SOS regulon and eventually DNA repair. The chain is LexA repressor from Parvibaculum lavamentivorans (strain DS-1 / DSM 13023 / NCIMB 13966).